The sequence spans 284 residues: D-tagatose-1,6-bisphosphate aldolase subunit GatY (284 aa).

Aspartate 82 acts as the Proton donor in catalysis. Zn(2+)-binding residues include histidine 83 and histidine 180. A dihydroxyacetone phosphate-binding site is contributed by glycine 181. Position 208 (histidine 208) interacts with Zn(2+). Dihydroxyacetone phosphate is bound by residues 209–211 and 230–233; these read GAS and NVAT.

This sequence belongs to the class II fructose-bisphosphate aldolase family. TagBP aldolase GatY subfamily. Forms a complex with GatZ. It depends on Zn(2+) as a cofactor.

The catalysed reaction is D-tagatofuranose 1,6-bisphosphate = D-glyceraldehyde 3-phosphate + dihydroxyacetone phosphate. Its pathway is carbohydrate metabolism; D-tagatose 6-phosphate degradation; D-glyceraldehyde 3-phosphate and glycerone phosphate from D-tagatose 6-phosphate: step 2/2. Its function is as follows. Catalytic subunit of the tagatose-1,6-bisphosphate aldolase GatYZ, which catalyzes the reversible aldol condensation of dihydroxyacetone phosphate (DHAP or glycerone-phosphate) with glyceraldehyde 3-phosphate (G3P) to produce tagatose 1,6-bisphosphate (TBP). Requires GatZ subunit for full activity and stability. Is involved in the catabolism of galactitol. This is D-tagatose-1,6-bisphosphate aldolase subunit GatY (gatY) from Escherichia coli.